Reading from the N-terminus, the 28-residue chain is Cytochrome b6-f complex subunit 6 (28 aa).

A helical membrane pass occupies residues 2-22 (VEYLVILSGMFGLALACFFGL).

It belongs to the PetL family. In terms of assembly, the 4 large subunits of the cytochrome b6-f complex are cytochrome b6, subunit IV (17 kDa polypeptide, PetD), cytochrome f and the Rieske protein, while the 4 small subunits are PetG, PetL, PetM and PetN. The complex functions as a dimer.

It localises to the plastid. It is found in the cyanelle thylakoid membrane. Its function is as follows. Component of the cytochrome b6-f complex, which mediates electron transfer between photosystem II (PSII) and photosystem I (PSI), cyclic electron flow around PSI, and state transitions. PetL is important for photoautotrophic growth as well as for electron transfer efficiency and stability of the cytochrome b6-f complex. The sequence is that of Cytochrome b6-f complex subunit 6 from Cyanophora paradoxa.